Here is a 279-residue protein sequence, read N- to C-terminus: Diaminopimelate epimerase (279 aa).

Asn-13 and Asn-66 together coordinate substrate. Residue Cys-75 is the Proton donor of the active site. Substrate-binding positions include Gly-76 to Asn-77, Asn-162, Asn-195, and Glu-213 to Arg-214. Catalysis depends on Cys-222, which acts as the Proton acceptor. Gly-223–Thr-224 provides a ligand contact to substrate.

It belongs to the diaminopimelate epimerase family. As to quaternary structure, homodimer.

Its subcellular location is the cytoplasm. It catalyses the reaction (2S,6S)-2,6-diaminopimelate = meso-2,6-diaminopimelate. It functions in the pathway amino-acid biosynthesis; L-lysine biosynthesis via DAP pathway; DL-2,6-diaminopimelate from LL-2,6-diaminopimelate: step 1/1. Its function is as follows. Catalyzes the stereoinversion of LL-2,6-diaminopimelate (L,L-DAP) to meso-diaminopimelate (meso-DAP), a precursor of L-lysine and an essential component of the bacterial peptidoglycan. The polypeptide is Diaminopimelate epimerase (Synechocystis sp. (strain ATCC 27184 / PCC 6803 / Kazusa)).